The following is a 426-amino-acid chain: Dihydroorotase (426 aa).

Residues His-62 and His-64 each coordinate Zn(2+). Residues 64-66 (HLR) and Asn-96 each bind substrate. Asp-154, His-181, His-234, and Asp-307 together coordinate Zn(2+). Asp-307 is an active-site residue. His-311 provides a ligand contact to substrate.

Belongs to the metallo-dependent hydrolases superfamily. DHOase family. Class I DHOase subfamily. The cofactor is Zn(2+).

The enzyme catalyses (S)-dihydroorotate + H2O = N-carbamoyl-L-aspartate + H(+). The protein operates within pyrimidine metabolism; UMP biosynthesis via de novo pathway; (S)-dihydroorotate from bicarbonate: step 3/3. Its function is as follows. Catalyzes the reversible cyclization of carbamoyl aspartate to dihydroorotate. The sequence is that of Dihydroorotase from Syntrophus aciditrophicus (strain SB).